The chain runs to 1391 residues: DNA-directed RNA polymerase subunit beta' (1391 aa).

Residues cysteine 72, cysteine 74, cysteine 87, and cysteine 90 each coordinate Zn(2+). Residues aspartate 462, aspartate 464, and aspartate 466 each contribute to the Mg(2+) site. Zn(2+) contacts are provided by cysteine 816, cysteine 890, cysteine 897, and cysteine 900.

This sequence belongs to the RNA polymerase beta' chain family. As to quaternary structure, the RNAP catalytic core consists of 2 alpha, 1 beta, 1 beta' and 1 omega subunit. When a sigma factor is associated with the core the holoenzyme is formed, which can initiate transcription. Mg(2+) serves as cofactor. It depends on Zn(2+) as a cofactor.

It carries out the reaction RNA(n) + a ribonucleoside 5'-triphosphate = RNA(n+1) + diphosphate. In terms of biological role, DNA-dependent RNA polymerase catalyzes the transcription of DNA into RNA using the four ribonucleoside triphosphates as substrates. The protein is DNA-directed RNA polymerase subunit beta' of Neisseria gonorrhoeae (strain ATCC 700825 / FA 1090).